A 245-amino-acid polypeptide reads, in one-letter code: Phycocyanobilin:ferredoxin oxidoreductase (245 aa).

Belongs to the HY2 family.

It carries out the reaction (2R,3Z)-phycocyanobilin + 4 oxidized [2Fe-2S]-[ferredoxin] = biliverdin IXalpha + 4 reduced [2Fe-2S]-[ferredoxin] + 4 H(+). Its function is as follows. Catalyzes the four-electron reduction of biliverdin IX-alpha (2-electron reduction at both the A and D rings); the reaction proceeds via an isolatable 2-electron intermediate, 181,182-dihydrobiliverdin. In Trichodesmium erythraeum (strain IMS101), this protein is Phycocyanobilin:ferredoxin oxidoreductase.